We begin with the raw amino-acid sequence, 372 residues long: Maltose/maltodextrin import ATP-binding protein MalK (372 aa).

The ABC transporter domain maps to 4–234; that stretch reads VTLKNVCKAY…PQNRFVAGFI (231 aa). 36–43 contributes to the ATP binding site; it reads GPSGCGKS.

The protein belongs to the ABC transporter superfamily. Maltooligosaccharide importer (TC 3.A.1.1.1) family. As to quaternary structure, the complex is composed of two ATP-binding proteins (MalK), two transmembrane proteins (MalG and MalK) and a solute-binding protein (MalE).

Its subcellular location is the cell inner membrane. The enzyme catalyses D-maltose(out) + ATP + H2O = D-maltose(in) + ADP + phosphate + H(+). In terms of biological role, part of the ABC transporter complex MalEFGK involved in maltose/maltodextrin import. Responsible for energy coupling to the transport system. The protein is Maltose/maltodextrin import ATP-binding protein MalK of Vibrio parahaemolyticus serotype O3:K6 (strain RIMD 2210633).